The following is a 449-amino-acid chain: Kynurenine 3-monooxygenase (449 aa).

The protein belongs to the aromatic-ring hydroxylase family. KMO subfamily. Requires FAD as cofactor.

The catalysed reaction is L-kynurenine + NADPH + O2 + H(+) = 3-hydroxy-L-kynurenine + NADP(+) + H2O. It functions in the pathway cofactor biosynthesis; NAD(+) biosynthesis; quinolinate from L-kynurenine: step 1/3. In terms of biological role, catalyzes the hydroxylation of L-kynurenine (L-Kyn) to form 3-hydroxy-L-kynurenine (L-3OHKyn). Required for synthesis of quinolinic acid. This chain is Kynurenine 3-monooxygenase, found in Legionella pneumophila (strain Corby).